The primary structure comprises 1857 residues: Ankyrin repeat domain-containing protein 31 (1857 aa).

Disordered regions lie at residues 1–30 (MENGAEASDCDSDETVIEGSVTENEPEDEE) and 195–215 (SEPGEEVTQTMTSKETKDEES). A compositionally biased stretch (polar residues) spans 195–207 (SEPGEEVTQTMTS). 3 ANK repeats span residues 475–504 (FGENLLYKAALHNDVDLVRCCIKNGENVNQ), 508–537 (DGWTALHEASIGGYYQAVSELLKGGADVNV), and 541–570 (YQITPLHDAVMNRHYKVAELLLMSGADPLF). Polar residues predominate over residues 676 to 691 (KFGKSNLNSVKNSRTN). 5 disordered regions span residues 676–711 (KFGKSNLNSVKNSRTNVSKRKGQKNRQQKKTQVDDR), 813–844 (VTTHQQPHTNQEQYSSPYKSLGNNSSNEKGKA), 995–1038 (RDSS…TVVH), 1046–1065 (KAEKRREDLPGNEPINNTDF), and 1075–1137 (ANSS…QNFR). Basic residues predominate over residues 692 to 704 (VSKRKGQKNRQQK). The segment covering 814 to 839 (TTHQQPHTNQEQYSSPYKSLGNNSSN) has biased composition (polar residues). Over residues 1008 to 1019 (SLERKQDTDKNY) the composition is skewed to basic and acidic residues. A compositionally biased stretch (polar residues) spans 1023–1032 (GPNTSSSSRP). The span at 1082-1136 (QRKEKENVRKSDAELTHNDSEAERTLKSCEEKKKNMDSETHSPCDIQEHRKDQNF) shows a compositional bias: basic and acidic residues. ANK repeat units follow at residues 1162–1191 (KGESQLHVAARGGNLSRVKVLIEARADVNL), 1195–1224 (AGWTPLHKAASGGFDDVIIELLQAGANVNC), and 1228–1257 (DGIVPLHGASAGNHLKAAEILLEHGANPNQ). Disordered stretches follow at residues 1457-1479 (NSDISSDKKSQEPPTMGDSAHAQ), 1540-1570 (GGLLRSKPTDDAEKIASSSQPAALTPHAENS), 1609-1640 (DPHSQKLSRCNPKRRNKKTASQQPSAGAAEPL), and 1663-1697 (AAAASHTDSTQSSLSSASAHQHPTKTVPHRNTTPR). The span at 1555-1570 (ASSSQPAALTPHAENS) shows a compositional bias: polar residues. Residues 1663 to 1683 (AAAASHTDSTQSSLSSASAHQ) show a composition bias toward low complexity. In terms of domain architecture, RAMA spans 1687-1782 (KTVPHRNTTP…TYLGRELVKC (96 aa)).

Interacts with REC114; the interaction is direct. Interacts with IHO1. Present in meiotic cells (at protein level).

It localises to the nucleus. It is found in the chromosome. Required for DNA double-strand breaks (DSBs) formation during meiotic recombination. Regulates the spatial and temporal patterns of pre-DSB recombinosome assembly and recombination activity by acting as a scaffold that anchors REC114 and other factors to specific genomic locations, thereby regulating DSB formation. Plays a key role in recombination in the pseudoautosomal regions of sex chromosomes. This Mus musculus (Mouse) protein is Ankyrin repeat domain-containing protein 31.